We begin with the raw amino-acid sequence, 582 residues long: V-type ATP synthase alpha chain (582 aa).

231 to 238 (GPFGSGKT) is a binding site for ATP.

It belongs to the ATPase alpha/beta chains family.

The enzyme catalyses ATP + H2O + 4 H(+)(in) = ADP + phosphate + 5 H(+)(out). Its function is as follows. Produces ATP from ADP in the presence of a proton gradient across the membrane. The V-type alpha chain is a catalytic subunit. This Deinococcus deserti (strain DSM 17065 / CIP 109153 / LMG 22923 / VCD115) protein is V-type ATP synthase alpha chain.